Here is a 387-residue protein sequence, read N- to C-terminus: MTSHPVFIDLSLDEQVQELRKYFKKLGAEISSEKSNKGVEDDLHKIIGVCDVCFKDGEPSQIDGILNSIVSIMITIPLDRGENIVLAYCEKMTKAPNQPLGKVCLQSLWRLFNNLDTASPLRYHVYYHLVQVAKQCEQVLEVFTGVDQLKTQFANCPPSSEQMQKLYRLLHDVTKDTNMELSSKVMIELLGTYTADNACVAREDAMKCIVTALADPNTFLLDPLLALKPVRFLEGDLIHDLLSIFVSDKLPSYVQFYEDHKEFVNSQGLNHEQNMKKMRLLTFMQLAESNPEMTFDTLTKELQITEDEVEPFVIQVLKTKLVRARLDQANRKVHISSTMHRTFGAPQWEQLRDLLQAWKENLSSVRDGLTNVSSAQLDLARTQKLIH.

A PCI domain is found at 181-340 (LSSKVMIELL…RKVHISSTMH (160 aa)).

The protein belongs to the eIF-3 subunit M family. As to quaternary structure, component of the eukaryotic translation initiation factor 3 (eIF-3) complex. The eIF-3 complex interacts with pix.

The protein resides in the cytoplasm. The protein localises to the golgi apparatus. Functionally, component of the eukaryotic translation initiation factor 3 (eIF-3) complex, which is involved in protein synthesis of a specialized repertoire of mRNAs and, together with other initiation factors, stimulates binding of mRNA and methionyl-tRNAi to the 40S ribosome. The eIF-3 complex specifically targets and initiates translation of a subset of mRNAs involved in cell proliferation. In Drosophila persimilis (Fruit fly), this protein is Eukaryotic translation initiation factor 3 subunit M.